A 499-amino-acid chain; its full sequence is Probable cytosol aminopeptidase (499 aa).

Mn(2+)-binding residues include K262 and D267. The active site involves K274. Mn(2+) is bound by residues D285, D344, and E346. R348 is an active-site residue.

This sequence belongs to the peptidase M17 family. The cofactor is Mn(2+).

It is found in the cytoplasm. The catalysed reaction is Release of an N-terminal amino acid, Xaa-|-Yaa-, in which Xaa is preferably Leu, but may be other amino acids including Pro although not Arg or Lys, and Yaa may be Pro. Amino acid amides and methyl esters are also readily hydrolyzed, but rates on arylamides are exceedingly low.. It carries out the reaction Release of an N-terminal amino acid, preferentially leucine, but not glutamic or aspartic acids.. Its function is as follows. Presumably involved in the processing and regular turnover of intracellular proteins. Catalyzes the removal of unsubstituted N-terminal amino acids from various peptides. The sequence is that of Probable cytosol aminopeptidase from Protochlamydia amoebophila (strain UWE25).